We begin with the raw amino-acid sequence, 302 residues long: tRNA dimethylallyltransferase (302 aa).

Residue 10-17 (GPTAIGKT) coordinates ATP. 12-17 (TAIGKT) is a substrate binding site. The tract at residues 35–38 (DSRQ) is interaction with substrate tRNA.

This sequence belongs to the IPP transferase family. As to quaternary structure, monomer. The cofactor is Mg(2+).

The enzyme catalyses adenosine(37) in tRNA + dimethylallyl diphosphate = N(6)-dimethylallyladenosine(37) in tRNA + diphosphate. In terms of biological role, catalyzes the transfer of a dimethylallyl group onto the adenine at position 37 in tRNAs that read codons beginning with uridine, leading to the formation of N6-(dimethylallyl)adenosine (i(6)A). The chain is tRNA dimethylallyltransferase from Christiangramia forsetii (strain DSM 17595 / CGMCC 1.15422 / KT0803) (Gramella forsetii).